Reading from the N-terminus, the 504-residue chain is DnaJ homolog subfamily C member 3 (504 aa).

The first 31 residues, 1–31 (MVAPGSVTSRLGSVFPFLLVLVDLQYEGAEC), serve as a signal peptide directing secretion. TPR repeat units lie at residues 37 to 70 (VEKHLELGKKLLAAGQLADALSQFHAAVDGDPDN), 72 to 104 (IAYYRRATVFLAMGKSKAALPDLTKVIQLKMDF), 105 to 138 (TAARLQRGHLLLKQGKLDEAEDDFKKVLKSNPSE), 154 to 187 (MQRLRSQALNAFGSGDYTAAIAFLDKILEVCVWD), 189 to 221 (ELRELRAECFIKEGEPRKAISDLKAASKLKNDN), 222 to 255 (TEAFYKISTLYYQLGDHELSLSEVRECLKLDQDH), 268 to 301 (LNKLIESAEELIRDGRYTDATSKYESVMKTEPSI), 306 to 339 (VRSKERICHCFSKDEKPVEAIRVCSEVLQMEPDN), and 340 to 373 (VNALKDRAEAYLIEEMYDEAIQDYETAQEHNEND). A disulfide bridge connects residues cysteine 248 and cysteine 258. Serine 274 is modified (phosphoserine; by FAM20C). Residues cysteine 313 and cysteine 329 are joined by a disulfide bond. Residues 375-393 (QIREGLEKAQRLLKQSQKR) are flexible linker. One can recognise a J domain in the interval 394 to 462 (DYYKILGVKR…EMRKKFDDGE (69 aa)). The disordered stretch occupies residues 451–481 (DPEMRKKFDDGEDPLDAESQQGGGGNPFHRS).

Interacts with EIF2AK4/GCN2; this interaction occurs under endoplasmic reticulum (ER) stress, hypothermic and amino acid starving stress conditions and inhibits EIF2AK4/GCN2 kinase activity. Interacts with EIF2AK3. Interacts with EIF2AK2. Forms a trimeric complex with DNAJB1 and HSPA8. Interacts with THAP12. Widely expressed with high level in the pancreas and testis. Also expressed in cell lines with different levels.

It is found in the endoplasmic reticulum. Involved in the unfolded protein response (UPR) during endoplasmic reticulum (ER) stress. Acts as a negative regulator of the EIF2AK4/GCN2 kinase activity by preventing the phosphorylation of eIF-2-alpha at 'Ser-52' and hence attenuating general protein synthesis under ER stress, hypothermic and amino acid starving stress conditions. Co-chaperone of HSPA8/HSC70, it stimulates its ATPase activity. May inhibit both the autophosphorylation of EIF2AK2/PKR and the ability of EIF2AK2 to catalyze phosphorylation of the EIF2A. May inhibit EIF2AK3/PERK activity. This is DnaJ homolog subfamily C member 3 (DNAJC3) from Homo sapiens (Human).